We begin with the raw amino-acid sequence, 335 residues long: MGSASPGLSSVSPSHLLLPPDTVSRTGLEKAAAGAVGLERRDWSPSPPATPEQGLSAFYLSYFDMLYPEDSSWAAKAPGASSREEPPEEPEQCPVIDSQAPAGSLDLVPGGLTLEEHSLEQVQSMVVGEVLKDIETACKLLNITADPMDWSPSNVQKWLLWTEHQYRLPPMGKAFQELAGKELCAMSEEQFRQRSPLGGDVLHAHLDIWKSAAWMKERTSPGAIHYCASTSEESWTDSEVDSSCSGQPIHLWQFLKELLLKPHSYGRFIRWLNKEKGIFKIEDSAQVARLWGIRKNRPAMNYDKLSRSIRQYYKKGIIRKPDISQRLVYQFVHPI.

Positions 1–20 (MGSASPGLSSVSPSHLLLPP) are enriched in low complexity. Disordered regions lie at residues 1–25 (MGSA…TVSR) and 75–100 (AKAP…DSQA). The PNT domain maps to 129-213 (EVLKDIETAC…AHLDIWKSAA (85 aa)). The ETS DNA-binding region spans 249–332 (IHLWQFLKEL…ISQRLVYQFV (84 aa)).

This sequence belongs to the ETS family. Interacts with the DNA-binding domain of the androgen receptor. Interacts with NKX3-1. Expressed in a very restricted set of primarily hormone-regulated epithelial tissues with particularly high expression in the prostate gland. Significantly lower expression is seen in other hormone regulated tissues such as mammary gland, salivary gland, and ovary. Expressed in prostate carcinoma cells.

The protein resides in the nucleus. May function as an androgen-independent transactivator of the prostate-specific antigen (PSA) promoter. Binds to 5'-GGAT-3' DNA sequences. May play a role in the regulation of the prostate gland and/or prostate cancer development. Acts as a transcriptional activator for SERPINB5 promoter. The polypeptide is SAM pointed domain-containing Ets transcription factor (SPDEF) (Homo sapiens (Human)).